The following is a 338-amino-acid chain: Protein UL141 (338 aa).

The first 25 residues, 1–25 (MCRRESLRTLPWLFWVLLSCPRLLE), serve as a signal peptide directing secretion. Residues 37 to 278 (DIAEKMWAEN…DTGMSPWATR (242 aa)) are Extracellular-facing. N-linked (GlcNAc...) asparagine; by host glycosylation is found at Asn-117, Asn-132, and Asn-147. The chain crosses the membrane as a helical span at residues 279-299 (GIAAFLGFWSIFTVCFLCYLC). Topologically, residues 300–338 (YLQCCGHWCPTPGRGRRGGEGYRRLPTYDSYPGVKKMKR) are cytoplasmic.

In terms of assembly, interacts with human PVR. Interacts with human TNFRSF10A and TNFRSF10B. Forms a homodimer that engages two TNFRSF10B monomers.

The protein localises to the host endoplasmic reticulum membrane. In terms of biological role, evasion of NK cell killing. Blocks surface expression of PVR which is a ligand for NK cell-activating receptors. Binds human PVR in the endoplasmic reticulum and prevents its maturation and transport to the cell surface. Targets also the natural killer cell activating ligand NECTIN2 for proteasome-mediated degradation. Additionally promotes intracellular retention of TNFRSF10A/TRAIL-R1 and TNFRSF10B/TRAIL-R2 and thus down-regulates their cell surface expression. The protein is Protein UL141 (UL141) of Human cytomegalovirus (strain Merlin) (HHV-5).